Here is a 541-residue protein sequence, read N- to C-terminus: Peptidyl-alpha-hydroxyglycine alpha-amidating lyase 1 (541 aa).

Residues 1-33 (MKSTDSAKCLGSKSLAICCLLLHLLLCIRPAVS) form the signal peptide. Residues 34-458 (QTQSPQRYLH…VAVHHPSGKA (425 aa)) are Extracellular-facing. Asn92 carries an N-linked (GlcNAc...) asparagine glycan. NHL repeat units lie at residues 164–205 (GKVQ…FPPR), 215–258 (LGDA…YSRK), and 272–314 (GISY…FLSS). Disulfide bonds link Cys228–Cys248 and Cys299–Cys310. Residue Asn315 is glycosylated (N-linked (GlcNAc...) asparagine). Residues 374–418 (KQLVSKFGPNNLQFQNPHDVAVTADGNEIYVAELNPMRIHKFVHR) form an NHL 4 repeat. Residues 459–479 (ILVASLMLLFAGSTFALALIF) form a helical membrane-spanning segment. At 480-541 (ARRRKRGCLP…TKTLASAQYA (62 aa)) the chain is on the cytoplasmic side. The tract at residues 521-541 (LDQQASDEEQETKTLASAQYA) is disordered.

The protein belongs to the peptidyl-alpha-hydroxyglycine alpha-amidating lyase family. Zn(2+) is required as a cofactor. Post-translationally, N-glycosylated. Widely expressed. In mature larvae, it is ubiquitously expressed with a low expression in all cells and a stronger expression in a subset of neurons. Colocalizes with neuropeptide proctolin. In adults, weak expression is observed in most neuronal cell bodies and in scattered large cells throughout the protocerebrum and also in the subesophageal neuromeres (at protein level).

It is found in the cell membrane. It catalyses the reaction a [peptide]-C-terminal (2S)-2-hydroxyglycine = a [peptide]-C-terminal amide + glyoxylate. Functionally, peptidyl-alpha-hydroxylglycine alpha-amidating lyase that catalyzes an essential reaction in C-terminal alpha-amidation of peptides. Mediates the dismutation of the unstable peptidyl(2-hydroxyglycine) intermediate to glyoxylate and the corresponding desglycine peptide amide. C-terminal amidation of peptides such as neuropeptides is essential for full biological activity. This is Peptidyl-alpha-hydroxyglycine alpha-amidating lyase 1 (Pal1) from Drosophila melanogaster (Fruit fly).